Reading from the N-terminus, the 242-residue chain is Biosynthetic peptidoglycan transglycosylase (242 aa).

A helical transmembrane segment spans residues Leu12–Pro32.

It belongs to the glycosyltransferase 51 family.

It localises to the cell inner membrane. The enzyme catalyses [GlcNAc-(1-&gt;4)-Mur2Ac(oyl-L-Ala-gamma-D-Glu-L-Lys-D-Ala-D-Ala)](n)-di-trans,octa-cis-undecaprenyl diphosphate + beta-D-GlcNAc-(1-&gt;4)-Mur2Ac(oyl-L-Ala-gamma-D-Glu-L-Lys-D-Ala-D-Ala)-di-trans,octa-cis-undecaprenyl diphosphate = [GlcNAc-(1-&gt;4)-Mur2Ac(oyl-L-Ala-gamma-D-Glu-L-Lys-D-Ala-D-Ala)](n+1)-di-trans,octa-cis-undecaprenyl diphosphate + di-trans,octa-cis-undecaprenyl diphosphate + H(+). The protein operates within cell wall biogenesis; peptidoglycan biosynthesis. Its function is as follows. Peptidoglycan polymerase that catalyzes glycan chain elongation from lipid-linked precursors. The polypeptide is Biosynthetic peptidoglycan transglycosylase (Stutzerimonas stutzeri (strain A1501) (Pseudomonas stutzeri)).